Consider the following 349-residue polypeptide: DNA polymerase IV (349 aa).

The 182-residue stretch at 4–185 folds into the UmuC domain; it reads IIHIDCDCFY…LPVAKLHGVG (182 aa). Asp8 and Asp103 together coordinate Mg(2+). The active site involves Glu104.

It belongs to the DNA polymerase type-Y family. As to quaternary structure, monomer. The cofactor is Mg(2+).

The protein resides in the cytoplasm. It catalyses the reaction DNA(n) + a 2'-deoxyribonucleoside 5'-triphosphate = DNA(n+1) + diphosphate. Functionally, poorly processive, error-prone DNA polymerase involved in untargeted mutagenesis. Copies undamaged DNA at stalled replication forks, which arise in vivo from mismatched or misaligned primer ends. These misaligned primers can be extended by PolIV. Exhibits no 3'-5' exonuclease (proofreading) activity. May be involved in translesional synthesis, in conjunction with the beta clamp from PolIII. The sequence is that of DNA polymerase IV from Pseudomonas paraeruginosa (strain DSM 24068 / PA7) (Pseudomonas aeruginosa (strain PA7)).